Here is a 432-residue protein sequence, read N- to C-terminus: PC-esterase domain-containing protein 1B (432 aa).

2 disordered regions span residues 273–312 and 407–432; these read WESS…SPGL and GPYM…SRPQ. Polar residues predominate over residues 285–294; sequence QDNIGPQFAQ. Residues 296 to 312 show a composition bias toward pro residues; it reads PPYPFPRPPPLLPSPGL.

It belongs to the PC-esterase family.

This is PC-esterase domain-containing protein 1B (Pced1b) from Rattus norvegicus (Rat).